A 343-amino-acid polypeptide reads, in one-letter code: Cell invasion protein SipD (343 aa).

The segment at 1-26 is disordered; sequence MLNIQNYSASPHPGIVAERPQTPSAS. Residues 295 to 322 adopt a coiled-coil conformation; it reads KAQEENMKTTLQTLTQKYSNANSLYDNL.

The protein belongs to the invasin protein D family.

The protein resides in the secreted. Functionally, required for translocation of effector proteins via the type III secretion system SPI-1, which is essential for an efficient bacterial internalization. Probably acts by modulating the secretion of SipA, SipB, and SipC. This is Cell invasion protein SipD (sipD) from Salmonella typhimurium (strain LT2 / SGSC1412 / ATCC 700720).